The following is a 202-amino-acid chain: ATP-dependent Clp protease proteolytic subunit (202 aa).

The Nucleophile role is filled by Ser-106. The active site involves His-131.

The protein belongs to the peptidase S14 family. Fourteen ClpP subunits assemble into 2 heptameric rings which stack back to back to give a disk-like structure with a central cavity, resembling the structure of eukaryotic proteasomes.

Its subcellular location is the cytoplasm. It catalyses the reaction Hydrolysis of proteins to small peptides in the presence of ATP and magnesium. alpha-casein is the usual test substrate. In the absence of ATP, only oligopeptides shorter than five residues are hydrolyzed (such as succinyl-Leu-Tyr-|-NHMec, and Leu-Tyr-Leu-|-Tyr-Trp, in which cleavage of the -Tyr-|-Leu- and -Tyr-|-Trp bonds also occurs).. Functionally, cleaves peptides in various proteins in a process that requires ATP hydrolysis. Has a chymotrypsin-like activity. Plays a major role in the degradation of misfolded proteins. This chain is ATP-dependent Clp protease proteolytic subunit, found in Acidovorax sp. (strain JS42).